Consider the following 92-residue polypeptide: Small ribosomal subunit protein uS19 (92 aa).

It belongs to the universal ribosomal protein uS19 family.

Its function is as follows. Protein S19 forms a complex with S13 that binds strongly to the 16S ribosomal RNA. The sequence is that of Small ribosomal subunit protein uS19 from Rhodospirillum centenum (strain ATCC 51521 / SW).